A 529-amino-acid polypeptide reads, in one-letter code: Glutamyl-tRNA(Gln) amidotransferase subunit B-2, chloroplastic/mitochondrial (529 aa).

The disordered stretch occupies residues 17–61; that stretch reads STRVSLPRGSIPPPPTSSSSSSSSSREGRRPRFFSTTTTSAERPV.

Belongs to the GatB/GatE family. GatB subfamily. As to quaternary structure, subunit of the heterotrimeric GatCAB amidotransferase (AdT) complex, composed of A, B and C subunits.

It localises to the mitochondrion. The protein localises to the plastid. It is found in the chloroplast. It catalyses the reaction L-glutamyl-tRNA(Gln) + L-glutamine + ATP + H2O = L-glutaminyl-tRNA(Gln) + L-glutamate + ADP + phosphate + H(+). Functionally, allows the formation of correctly charged Gln-tRNA(Gln) through the transamidation of misacylated Glu-tRNA(Gln) in chloroplasts and mitochondria. The reaction takes place in the presence of glutamine and ATP through an activated gamma-phospho-Glu-tRNA(Gln). This Micromonas commoda (strain RCC299 / NOUM17 / CCMP2709) (Picoplanktonic green alga) protein is Glutamyl-tRNA(Gln) amidotransferase subunit B-2, chloroplastic/mitochondrial.